The chain runs to 262 residues: tRNA pseudouridine synthase A (262 aa).

Aspartate 51 serves as the catalytic Nucleophile. Substrate is bound at residue tyrosine 109.

This sequence belongs to the tRNA pseudouridine synthase TruA family. As to quaternary structure, homodimer.

It catalyses the reaction uridine(38/39/40) in tRNA = pseudouridine(38/39/40) in tRNA. In terms of biological role, formation of pseudouridine at positions 38, 39 and 40 in the anticodon stem and loop of transfer RNAs. The protein is tRNA pseudouridine synthase A of Glaesserella parasuis serovar 5 (strain SH0165) (Haemophilus parasuis).